The chain runs to 320 residues: ATP-dependent 6-phosphofructokinase (320 aa).

ATP contacts are provided by residues Gly12, 73 to 74 (RF), and 103 to 106 (GDGS). Asp104 provides a ligand contact to Mg(2+). 126-128 (TID) serves as a coordination point for substrate. The active-site Proton acceptor is Asp128. Residue Arg155 participates in ADP binding. Residues Arg163 and 170-172 (MGR) each bind substrate. Residues 186 to 188 (GCE) and Lys212 each bind ADP. Residues Glu223, Arg244, and 250-253 (HIQR) each bind substrate.

Belongs to the phosphofructokinase type A (PFKA) family. ATP-dependent PFK group I subfamily. Prokaryotic clade 'B1' sub-subfamily. Homotetramer. Mg(2+) serves as cofactor.

It is found in the cytoplasm. It carries out the reaction beta-D-fructose 6-phosphate + ATP = beta-D-fructose 1,6-bisphosphate + ADP + H(+). The protein operates within carbohydrate degradation; glycolysis; D-glyceraldehyde 3-phosphate and glycerone phosphate from D-glucose: step 3/4. Its activity is regulated as follows. Allosterically activated by ADP and other diphosphonucleosides, and allosterically inhibited by phosphoenolpyruvate. Its function is as follows. Catalyzes the phosphorylation of D-fructose 6-phosphate to fructose 1,6-bisphosphate by ATP, the first committing step of glycolysis. The polypeptide is ATP-dependent 6-phosphofructokinase (Buchnera aphidicola subsp. Cinara cedri (strain Cc)).